The sequence spans 634 residues: Lamin tail domain-containing protein 2 (634 aa).

Residues 1-44 (MRWLRPAGRRREQESVSGHLGPPAGAPAAPETPTCLPDTTPHPA) are disordered. A coiled-coil region spans residues 106-169 (SHSQEKLLQN…QKSCLLQLAR (64 aa)). Residues 228-237 (FTNMEPSSKQ) show a composition bias toward polar residues. Disordered stretches follow at residues 228–349 (FTNM…TDPD) and 464–575 (HRIP…PAEA). A compositionally biased stretch (low complexity) spans 276 to 287 (SSSGGADSDSSS). Residues 310–321 (SEQALVQAGSYS) show a composition bias toward polar residues. Residues 322 to 337 (RDSEDLQKTHSPRHGE) are compositionally biased toward basic and acidic residues. An LTD domain is found at 350-468 (HWSPELLQSP…EVLSEHRIPR (119 aa)). The span at 502 to 513 (PPRPPRPLRKGR) shows a compositional bias: basic residues. The segment covering 540–550 (HAREGPARPEN) has biased composition (basic and acidic residues).

This chain is Lamin tail domain-containing protein 2 (LMNTD2), found in Homo sapiens (Human).